A 511-amino-acid chain; its full sequence is MMKMRWLSAAVMLTLYTSSSWAFSIDDVAKQAQSLAGKGYEAPKSNLPSVFRDMKYADYQQIQFNHDKAYWNNLKTPFKLEFYHQGMYFDTPVKINEVTATAVKRIKYSPDYFTFGDVRHDKDTVKDLGFAGFKVLYPINSKDKNDEIVSMLGASYFRVIGAGQVYGLSARGLAIDTALPSGEEFPRFKEFWIERPKPTDKRLTIYALLDSPRATGAYKFVVMPGRDTVVDVQSKIYLRDKVGKLGVAPLTSMFLFGPNQPSPANNYRPELHDSNGLSIHAGNGEWIWRPLNNPKHLAVSSFSMENPQGFGLLQRGRDFSRFEDLDDRYDLRPSAWVTPKGEWGKGSVELVEIPTNDETNDNIVAYWTPDQLPEPGKEMNFKYTITFSRDEDKLHAPDNAWVQQTRRSTGDVKQSNLIRQPDGTIAFVVDFTGAEMKKLPEDTPVTAQTSIGDNGEIVESTVRYNPVTKGWRLVMRVKVKDAKKTTEMRAALVNADQTLSETWSYQLPANE.

An N-terminal signal peptide occupies residues 1–22; that stretch reads MMKMRWLSAAVMLTLYTSSSWA.

Belongs to the OpgD/OpgG family.

The protein localises to the periplasm. It functions in the pathway glycan metabolism; osmoregulated periplasmic glucan (OPG) biosynthesis. Functionally, involved in the biosynthesis of osmoregulated periplasmic glucans (OPGs). The protein is Glucans biosynthesis protein G of Shigella dysenteriae serotype 1 (strain Sd197).